The following is a 477-amino-acid chain: MDFKKVFELGKFSDLELILVDKTNSLSINVHKVILYSAIPYFTTMFDNFKEKDCPSIKMEVIDVVVVSDIIKSFYGIETNNDPDWEYLLKEYISLDYLQLSCTLPDNIKVPDECFETLLDLVEIIGYNSKTIDMLANNLPNDFNLSTLPIELLREIESRYYDFYTMIIDRDNRMYSFNMCRKKLLQVTNKKYDDMYYFSVNDNLVLKASDKKIYTCNLSTKILKEHKENISMTDFHHHHLGETDIFIPENEAFKENIKNRIQKYLNNSSSNDGITEIYYSPDLTQIAVIFMLYQEESGEMYWLFIYDCKSDKLKKIYFKFDRISNVLFVPDGVIFYTHCSQKVIAWSNNKFQDVCCSLKHVKQITYDLGDNLLILTHNKFIVYSLNNKCVVNQVNCVLDKIEFVSKEIIIGYHKFYTNKSCVTNTKIIMYNILTGNETNKINVDLEIYKLVVVPDKARTKQKLKEYIESISTERISS.

The BTB domain occupies 13–83 (SDLELILVDK…FYGIETNNDP (71 aa)).

This sequence belongs to the mimivirus BTB/WD family.

This is Putative BTB/POZ domain-containing protein R830 from Acanthamoeba polyphaga mimivirus (APMV).